A 316-amino-acid chain; its full sequence is uncharacterized protein (316 aa).

Residues 285–316 (APEGDLGDIIEVDPSEPRSDPYRRLRTPPPGG) are disordered. Positions 289–298 (DLGDIIEVDP) are enriched in acidic residues.

Functionally, possibly necessary for replication. This is an uncharacterized protein from Halobacterium salinarum (Halobacterium halobium).